Reading from the N-terminus, the 99-residue chain is MSPDNYLYLSALLFTIGAAGVLLRRNAIVMFMCIELMLNAANLAFVTFSRIHGHLDGQVVAFFTMVVAACEVVIGLAIITMIFRTRRSASVDAANLLKH.

3 consecutive transmembrane segments (helical) span residues 3–23, 28–48, and 59–79; these read PDNY…GVLL, IVMF…FVTF, and VVAF…LAII.

Belongs to the complex I subunit 4L family. NDH-1 is composed of 14 different subunits. Subunits NuoA, H, J, K, L, M, N constitute the membrane sector of the complex.

The protein resides in the cell membrane. The catalysed reaction is a quinone + NADH + 5 H(+)(in) = a quinol + NAD(+) + 4 H(+)(out). Functionally, NDH-1 shuttles electrons from NADH, via FMN and iron-sulfur (Fe-S) centers, to quinones in the respiratory chain. The immediate electron acceptor for the enzyme in this species is believed to be a menaquinone. Couples the redox reaction to proton translocation (for every two electrons transferred, four hydrogen ions are translocated across the cytoplasmic membrane), and thus conserves the redox energy in a proton gradient. In Mycolicibacterium vanbaalenii (strain DSM 7251 / JCM 13017 / BCRC 16820 / KCTC 9966 / NRRL B-24157 / PYR-1) (Mycobacterium vanbaalenii), this protein is NADH-quinone oxidoreductase subunit K.